Here is a 374-residue protein sequence, read N- to C-terminus: MVFSPRLSAFVALVALTNAATAVPMYGQCGGSGYTGPTQCDPGLVCVKLNDWYSQCQSGGAQPPVTTTSSPPVTVSPPPSTTTVAPPVATGPPAPEIPAGQLTQLRSFGNNPSNISMFVYKPQNVKNRPGLLVALHPCGGTAQQYFSGFPGFRQHADQRGFIVLYGQSPPGSSNCWDIISTASLTREGGDDSTGIASAVKYALQNWNVDPEKVFVTGTSSGAMMTNIMAATYPDLFKAGAVWAGTAVGCLSANTPQFPPDPCQSGTVIRTPQEWGDRVRRAYPGYNGPWPRMQIWHGTNDFALDHKNLAEQMKQWTNVHNISQTPTSTSPSTPRQGWTKQVYGNGLVETFSGQGAGHGLPESGTEVVAMDFFGL.

An N-terminal signal peptide occupies residues 1-22; it reads MVFSPRLSAFVALVALTNAATA. The CBM1 domain occupies 23–57; the sequence is VPMYGQCGGSGYTGPTQCDPGLVCVKLNDWYSQCQ. Residues 58-99 form a ser/Thr/Pro-rich linker region; sequence SGGAQPPVTTTSSPPVTVSPPPSTTTVAPPVATGPPAPEIPA. Residues 60–86 form a disordered region; sequence GAQPPVTTTSSPPVTVSPPPSTTTVAP. Low complexity predominate over residues 63-73; sequence PPVTTTSSPPV. The tract at residues 100–374 is catalytic; that stretch reads GQLTQLRSFG…EVVAMDFFGL (275 aa). N-linked (GlcNAc...) asparagine glycosylation occurs at asparagine 114. Serine 219 acts as the Charge relay system in catalysis. An N-linked (GlcNAc...) asparagine glycan is attached at asparagine 320.

This sequence belongs to the carbohydrate esterase 1 (CE1) family. AxeA subfamily. Monomer. Glycosylated.

The protein resides in the secreted. It carries out the reaction Deacetylation of xylans and xylo-oligosaccharides.. It participates in glycan degradation; xylan degradation. In terms of biological role, acetylxylan esterase involved in the hydrolysis of xylan, a major structural heterogeneous polysaccharide found in plant biomass representing the second most abundant polysaccharide in the biosphere, after cellulose. Degrades acetylated xylans by cleaving acetyl side groups from the hetero-xylan backbone. The chain is Acetylxylan esterase from Coprinopsis cinerea (strain Okayama-7 / 130 / ATCC MYA-4618 / FGSC 9003) (Inky cap fungus).